A 294-amino-acid chain; its full sequence is Single-stranded nucleic acid-binding protein (294 aa).

Residues M1 to K30 form a disordered region. S2 is subject to N-acetylserine. A phosphoserine mark is found at S2 and S16. Positions N10–R25 are enriched in polar residues. Residues D37 to T119 form the RRM 1 domain. Position 49 is a phosphothreonine (T49). S66 is modified (phosphoserine). A phosphothreonine mark is found at T91 and T119. R125 carries the post-translational modification Omega-N-methylarginine. An RNA-binding RGG-box region spans residues R131–G151. 3 positions are modified to dimethylated arginine: R135, R137, and R141. R145 is modified (dimethylated arginine; alternate). An Omega-N-methylarginine; alternate modification is found at R145. R149 is modified (omega-N-methylarginine). Gly residues predominate over residues G151–N169. The tract at residues G151–Q171 is disordered. R153, R155, and R159 each carry dimethylated arginine. Residues R161 and R165 each carry the dimethylated arginine; alternate modification. Residues R161 and R165 each carry the omega-N-methylarginine; alternate modification. In terms of domain architecture, RRM 2 spans D186–I274. At T242 the chain carries Phosphothreonine. The residue at position 244 (S244) is a Phosphoserine. A disordered region spans residues R275 to E294. The segment covering N278–G288 has biased composition (acidic residues). T287 carries the post-translational modification Phosphothreonine. Phosphoserine is present on S289.

This sequence belongs to the RRM GAR family. In terms of assembly, associated with snR10 and snR11 small nuclear RNAs.

It is found in the cytoplasm. It localises to the nucleus. The protein resides in the nucleolus. The protein localises to the P-body. Its subcellular location is the stress granule. In terms of biological role, functions in the transition of mRNAs from translation to an mRNP complex destined for decapping. High-copy-number suppressor of decapping defects. Overexpression suppresses decapping defects in both DCP1-2 and DCP2-7 mutations. Acts to promote translational repression of mRNA in conjunction with DHH1 and subsequent mRNA localization to P bodies. Promotes translational repression of mRNA during glucose deprivation. This is Single-stranded nucleic acid-binding protein (SBP1) from Saccharomyces cerevisiae (strain ATCC 204508 / S288c) (Baker's yeast).